Reading from the N-terminus, the 222-residue chain is Glutathione S-transferase A4 (222 aa).

N-acetylmethionine is present on Met1. Residues Thr3–Gly83 form the GST N-terminal domain. Glutathione-binding positions include Tyr9, Gln54–Val55, and Gln67–Thr68. Positions Asp85–Pro208 constitute a GST C-terminal domain.

Belongs to the GST superfamily. Alpha family. Homodimer.

It localises to the cytoplasm. The catalysed reaction is RX + glutathione = an S-substituted glutathione + a halide anion + H(+). Its function is as follows. Conjugation of reduced glutathione to a wide number of exogenous and endogenous hydrophobic electrophiles. This chain is Glutathione S-transferase A4 (GSTA4), found in Bos taurus (Bovine).